We begin with the raw amino-acid sequence, 407 residues long: Arginine deiminase (407 aa).

Cysteine 397 acts as the Amidino-cysteine intermediate in catalysis.

This sequence belongs to the arginine deiminase family.

It is found in the cytoplasm. The catalysed reaction is L-arginine + H2O = L-citrulline + NH4(+). It functions in the pathway amino-acid degradation; L-arginine degradation via ADI pathway; carbamoyl phosphate from L-arginine: step 1/2. The chain is Arginine deiminase from Salmonella choleraesuis (strain SC-B67).